Consider the following 768-residue polypeptide: Actin filament-associated protein 1-like 1 (768 aa).

A disordered region spans residues 83–145; it reads LRDMSDDGEP…GKSPEYISSH (63 aa). Serine 87, serine 93, serine 97, serine 103, and serine 153 each carry phosphoserine. The span at 165-185 shows a compositional bias: polar residues; that stretch reads SYPTTRMNGELKNSYNDSDAM. Residues 165–211 are disordered; the sequence is SYPTTRMNGELKNSYNDSDAMSSSYESYDEEEEEEKGRQPKHQWPSE. A PH 1 domain is found at 220–316; that stretch reads DCRICAFLLR…WLKVIREVSR (97 aa). 2 positions are modified to phosphoserine: serine 329 and serine 343. Residues 340 to 349 are compositionally biased toward basic and acidic residues; the sequence is KRLSQEKQNS. The segment at 340–382 is disordered; the sequence is KRLSQEKQNSDSDSLGMNDSGSTLGRREACEHGKGKKNSLAEL. The segment covering 350 to 362 has biased composition (polar residues); that stretch reads DSDSLGMNDSGST. The PH 2 domain maps to 418–512; the sequence is EVPCCGYLNV…WLGLLLVEMG (95 aa). Tyrosine 557 is modified (phosphotyrosine). The disordered stretch occupies residues 564 to 609; it reads KVQDEEPQRPTGAQVKRHASSCSEKSHRADPQVKVKRHASSANQYK. Residues 587-596 are compositionally biased toward basic and acidic residues; the sequence is EKSHRADPQV. Residues 611–701 are a coiled coil; that stretch reads GKNRAEEDAR…AVKERLQQSL (91 aa). The segment at 705-768 is disordered; the sequence is PALGLSVSNK…KAKEWEMKKT (64 aa). A compositionally biased stretch (polar residues) spans 710 to 734; the sequence is SVSNKNKSQDTTNKPQSNAPEQSLP. Position 747 is a phosphoserine (serine 747). Over residues 759–768 the composition is skewed to basic and acidic residues; the sequence is KAKEWEMKKT.

In terms of assembly, interacts with CTTN.

The protein resides in the cytoplasm. Its subcellular location is the cell projection. It is found in the podosome. It localises to the invadopodium. The protein localises to the cytoskeleton. The protein resides in the stress fiber. In terms of biological role, may be involved in podosome and invadosome formation. The protein is Actin filament-associated protein 1-like 1 (Afap1l1) of Mus musculus (Mouse).